A 621-amino-acid polypeptide reads, in one-letter code: DNA mismatch repair protein MutL (621 aa).

It belongs to the DNA mismatch repair MutL/HexB family.

This protein is involved in the repair of mismatches in DNA. It is required for dam-dependent methyl-directed DNA mismatch repair. May act as a 'molecular matchmaker', a protein that promotes the formation of a stable complex between two or more DNA-binding proteins in an ATP-dependent manner without itself being part of a final effector complex. This Xylella fastidiosa (strain M12) protein is DNA mismatch repair protein MutL.